The following is a 565-amino-acid chain: MRSDTIKTGFEKAPHRSLLKATGSIVSNNDFKKPFIGICNSYNELIPGHSHLQELGRIAKEEVRKAGGVPFEFNTIGVCDGIAMGHIGMRYSLASRELIADSVETVAQAHCLDGLVCIPNCDKITPGMMMAALRINIPVIFVSGGPMKAGHTPSGQTVDLISVFEAVGQFSAGKIGNEELESIEESACPGCGSCSGMFTANSMNCLSEALGFALPGNGTILAIDPRRNELVREASRRIIDLVKKDIKPRDILSRNALLNAFALDFAMGGSTNTILHTLAIANEAELDFNFSELNALSAKTPYICKVSPATMAVHIEDVDRAGGVSAILHELSRIDGLLDLSTLTVTGKTLGENIADAEILDYTVIRSIDEPYSATGGLAVLFGNLAPQGAVVKTGAVAPEMMKHTGPAKIYDCQDDAIKGIMGDDVKAGDVVVIRYEGPKGGPGMPEMLSPTSAIMGRGLGESVALITDGRFSGGSRGACIGHISPEAAERGPIAALHNGDLITIDIPSRSISVNLTEETINERLAALKPFEPKIKKGYLARYAQMVTSANTGAILKNPVSCEPK.

Residue Asp80 coordinates Mg(2+). Residue Cys121 participates in [2Fe-2S] cluster binding. 2 residues coordinate Mg(2+): Asp122 and Lys123. Lys123 carries the post-translational modification N6-carboxylysine. [2Fe-2S] cluster is bound at residue Cys194. Glu447 serves as a coordination point for Mg(2+). Ser473 acts as the Proton acceptor in catalysis.

The protein belongs to the IlvD/Edd family. Homodimer. Requires [2Fe-2S] cluster as cofactor. Mg(2+) is required as a cofactor.

It carries out the reaction (2R)-2,3-dihydroxy-3-methylbutanoate = 3-methyl-2-oxobutanoate + H2O. The enzyme catalyses (2R,3R)-2,3-dihydroxy-3-methylpentanoate = (S)-3-methyl-2-oxopentanoate + H2O. Its pathway is amino-acid biosynthesis; L-isoleucine biosynthesis; L-isoleucine from 2-oxobutanoate: step 3/4. The protein operates within amino-acid biosynthesis; L-valine biosynthesis; L-valine from pyruvate: step 3/4. Its function is as follows. Functions in the biosynthesis of branched-chain amino acids. Catalyzes the dehydration of (2R,3R)-2,3-dihydroxy-3-methylpentanoate (2,3-dihydroxy-3-methylvalerate) into 2-oxo-3-methylpentanoate (2-oxo-3-methylvalerate) and of (2R)-2,3-dihydroxy-3-methylbutanoate (2,3-dihydroxyisovalerate) into 2-oxo-3-methylbutanoate (2-oxoisovalerate), the penultimate precursor to L-isoleucine and L-valine, respectively. This Pelodictyon phaeoclathratiforme (strain DSM 5477 / BU-1) protein is Dihydroxy-acid dehydratase.